A 150-amino-acid polypeptide reads, in one-letter code: Ribosome-binding factor A (150 aa).

The disordered stretch occupies residues Leu131–Glu150.

It belongs to the RbfA family. In terms of assembly, monomer. Binds 30S ribosomal subunits, but not 50S ribosomal subunits or 70S ribosomes.

It localises to the cytoplasm. Functionally, one of several proteins that assist in the late maturation steps of the functional core of the 30S ribosomal subunit. Associates with free 30S ribosomal subunits (but not with 30S subunits that are part of 70S ribosomes or polysomes). Required for efficient processing of 16S rRNA. May interact with the 5'-terminal helix region of 16S rRNA. The sequence is that of Ribosome-binding factor A from Brucella melitensis biotype 2 (strain ATCC 23457).